The following is a 451-amino-acid chain: NADP-specific glutamate dehydrogenase (451 aa).

Lys114 is a catalytic residue.

This sequence belongs to the Glu/Leu/Phe/Val dehydrogenases family. As to quaternary structure, homohexamer.

The enzyme catalyses L-glutamate + NADP(+) + H2O = 2-oxoglutarate + NH4(+) + NADPH + H(+). The polypeptide is NADP-specific glutamate dehydrogenase (GDH2) (Fusarium fujikuroi (Bakanae and foot rot disease fungus)).